The chain runs to 356 residues: Peptide chain release factor 1 (356 aa).

The residue at position 233 (glutamine 233) is an N5-methylglutamine.

It belongs to the prokaryotic/mitochondrial release factor family. Post-translationally, methylated by PrmC. Methylation increases the termination efficiency of RF1.

It localises to the cytoplasm. Peptide chain release factor 1 directs the termination of translation in response to the peptide chain termination codons UAG and UAA. The sequence is that of Peptide chain release factor 1 from Halalkalibacterium halodurans (strain ATCC BAA-125 / DSM 18197 / FERM 7344 / JCM 9153 / C-125) (Bacillus halodurans).